The sequence spans 569 residues: Putative diguanylate cyclase DgcQ (569 aa).

2 helical membrane-spanning segments follow: residues 25–45 (LGPG…STLL) and 365–385 (IALT…WYVI). The GGDEF domain maps to 433–568 (HPFSVIQVDL…GRNRVFASDN (136 aa)). Aspartate 441 serves as a coordination point for Mg(2+). Substrate contacts are provided by asparagine 449, histidine 454, and aspartate 458. Glutamate 484 is a Mg(2+) binding site. The active-site Proton acceptor is the glutamate 484.

In terms of assembly, homodimer. It depends on Mg(2+) as a cofactor.

It is found in the cell inner membrane. It catalyses the reaction 2 GTP = 3',3'-c-di-GMP + 2 diphosphate. Its pathway is glycan metabolism; bacterial cellulose biosynthesis. It participates in purine metabolism; 3',5'-cyclic di-GMP biosynthesis. In terms of biological role, catalyzes the synthesis of cyclic-di-GMP (c-di-GMP) via the condensation of 2 GTP molecules. Cyclic-di-GMP is a second messenger which controls cell surface-associated traits in bacteria. Involved in the regulation of cellulose production. The chain is Putative diguanylate cyclase DgcQ from Shigella flexneri.